The primary structure comprises 1196 residues: DNA-directed RNA polymerase I subunit RPA2 (1196 aa).

A C4-type zinc finger spans residues 1097–1124 (CRECGSILTTQSSVPKIGSMVTIRCRRC).

Belongs to the RNA polymerase beta chain family. Component of the RNA polymerase I (Pol I) complex consisting of 14 subunits.

It localises to the nucleus. Its subcellular location is the nucleolus. The catalysed reaction is RNA(n) + a ribonucleoside 5'-triphosphate = RNA(n+1) + diphosphate. In terms of biological role, DNA-dependent RNA polymerase catalyzes the transcription of DNA into RNA using the four ribonucleoside triphosphates as substrates. Second largest core component of RNA polymerase I which synthesizes ribosomal RNA precursors. Proposed to contribute to the polymerase catalytic activity and forms the polymerase active center together with the largest subunit. Pol I is composed of mobile elements and RPA2 is part of the core element with the central large cleft and probably a clamp element that moves to open and close the cleft. The polypeptide is DNA-directed RNA polymerase I subunit RPA2 (RPA2) (Eremothecium gossypii (strain ATCC 10895 / CBS 109.51 / FGSC 9923 / NRRL Y-1056) (Yeast)).